A 213-amino-acid polypeptide reads, in one-letter code: Protein Syd (213 aa).

It belongs to the Syd family.

The protein localises to the cell inner membrane. Its function is as follows. Interacts with the SecY protein in vivo. May bind preferentially to an uncomplexed state of SecY, thus functioning either as a chelating agent for excess SecY in the cell or as a regulatory factor that negatively controls the translocase function. This Shewanella halifaxensis (strain HAW-EB4) protein is Protein Syd.